Reading from the N-terminus, the 507-residue chain is Nucleoporin p54 (507 aa).

Tandem repeats lie at residues 5–6 (FG), 25–26 (FG), 28–29 (FG), 53–54 (FG), 61–62 (FG), 63–64 (FG), 67–68 (FG), 87–88 (FG), and 444–445 (FG). Residues 5 to 445 (FGAPSGTSGT…SQIRMQNHFG (441 aa)) form a 9 X 2 AA repeats of F-G region.

Belongs to the NUP54 family. In terms of assembly, component of the p62 complex, a complex composed of NUP62, NUP54, and the isoform p58 and isoform p45 of NUP58. Interacts with NUTF2. Post-translationally, O-glycosylated.

Its subcellular location is the nucleus. The protein localises to the nuclear pore complex. The protein resides in the nucleus membrane. Its function is as follows. Component of the nuclear pore complex, a complex required for the trafficking across the nuclear membrane. This is Nucleoporin p54 (NUP54) from Homo sapiens (Human).